Here is a 488-residue protein sequence, read N- to C-terminus: Probable malate:quinone oxidoreductase (488 aa).

It belongs to the MQO family. Requires FAD as cofactor.

The catalysed reaction is (S)-malate + a quinone = a quinol + oxaloacetate. Its pathway is carbohydrate metabolism; tricarboxylic acid cycle; oxaloacetate from (S)-malate (quinone route): step 1/1. This Neisseria meningitidis serogroup A / serotype 4A (strain DSM 15465 / Z2491) protein is Probable malate:quinone oxidoreductase.